A 254-amino-acid polypeptide reads, in one-letter code: Alcohol dehydrogenase (254 aa).

NAD(+) is bound at residue 10-33; that stretch reads FVAGLGGIGLDTSREIVKSGPKNL. Residue S138 coordinates substrate. Residue Y151 is the Proton acceptor of the active site.

This sequence belongs to the short-chain dehydrogenases/reductases (SDR) family. In terms of assembly, homodimer.

The catalysed reaction is a primary alcohol + NAD(+) = an aldehyde + NADH + H(+). It carries out the reaction a secondary alcohol + NAD(+) = a ketone + NADH + H(+). The protein is Alcohol dehydrogenase (Adh) of Drosophila adiastola (Fruit fly).